Consider the following 438-residue polypeptide: 3-phosphoshikimate 1-carboxyvinyltransferase (438 aa).

The 3-phosphoshikimate site is built by Lys25, Ser26, and Arg30. Lys25 provides a ligand contact to phosphoenolpyruvate. Phosphoenolpyruvate contacts are provided by Gly99 and Arg128. Residues Ser173, Gln175, Asp325, and Lys352 each contribute to the 3-phosphoshikimate site. Gln175 contributes to the phosphoenolpyruvate binding site. Asp325 acts as the Proton acceptor in catalysis. Residues Arg356 and Arg398 each coordinate phosphoenolpyruvate.

The protein belongs to the EPSP synthase family. In terms of assembly, monomer.

It is found in the cytoplasm. The catalysed reaction is 3-phosphoshikimate + phosphoenolpyruvate = 5-O-(1-carboxyvinyl)-3-phosphoshikimate + phosphate. It functions in the pathway metabolic intermediate biosynthesis; chorismate biosynthesis; chorismate from D-erythrose 4-phosphate and phosphoenolpyruvate: step 6/7. Catalyzes the transfer of the enolpyruvyl moiety of phosphoenolpyruvate (PEP) to the 5-hydroxyl of shikimate-3-phosphate (S3P) to produce enolpyruvyl shikimate-3-phosphate and inorganic phosphate. The protein is 3-phosphoshikimate 1-carboxyvinyltransferase of Prochlorococcus marinus (strain MIT 9515).